Here is a 203-residue protein sequence, read N- to C-terminus: Large ribosomal subunit protein bL25 (203 aa).

It belongs to the bacterial ribosomal protein bL25 family. CTC subfamily. As to quaternary structure, part of the 50S ribosomal subunit; part of the 5S rRNA/L5/L18/L25 subcomplex. Contacts the 5S rRNA. Binds to the 5S rRNA independently of L5 and L18.

In terms of biological role, this is one of the proteins that binds to the 5S RNA in the ribosome where it forms part of the central protuberance. The polypeptide is Large ribosomal subunit protein bL25 (Cereibacter sphaeroides (strain ATCC 17029 / ATH 2.4.9) (Rhodobacter sphaeroides)).